The following is a 388-amino-acid chain: Na(+)/H(+) antiporter NhaA (388 aa).

Topologically, residues 1–11 (MKHLHRFFSSD) are cytoplasmic. The helical transmembrane segment at 12–31 (ASGGIILIIAAILAMMMANS) threads the bilayer. Over 32–58 (GATSGWYHDFLETPVQLRVGSLEINKN) the chain is Periplasmic. Residues 59-80 (MLLWINDALMAVFFLLVGLEVK) traverse the membrane as a helical segment. The Cytoplasmic segment spans residues 81 to 96 (RELMQGSLASLRQAAF). The chain crosses the membrane as a helical span at residues 97-116 (PVIAAIGGMIVPALLYLAFN). The Periplasmic segment spans residues 117 to 122 (YADPIT). A helical membrane pass occupies residues 123–130 (REGWAIPA). The Cytoplasmic segment spans residues 131–154 (ATDIAFALGVLALLGSRVPLALKI). The helical transmembrane segment at 155-176 (FLMALAIIDDLGAIIIIALFYT) threads the bilayer. At 177 to 180 (NDLS) the chain is on the periplasmic side. Residues 181–200 (MASLGVAAVAIAVLAVLNLC) traverse the membrane as a helical segment. Topologically, residues 201–204 (GVRR) are cytoplasmic. Residues 205 to 222 (TGVYILVGVVLWTAVLKS) traverse the membrane as a helical segment. Position 223 (Gly-223) is a topological domain, periplasmic. Residues 224–236 (VHATLAGVIVGFF) traverse the membrane as a helical segment. Topologically, residues 237–253 (IPLKEKHGRSPAKRLEH) are cytoplasmic. A helical transmembrane segment spans residues 254–272 (VLHPWVAYLILPLFAFANA). Topologically, residues 273 to 286 (GVSLQGVTLDGLTS) are periplasmic. Residues 287-310 (ILPLGIIAGLLIGKPLGISLFCWL) form a helical membrane-spanning segment. Residues 311–339 (ALRLKLAHLPEGTTYQQIMAVGILCGIGF) are Cytoplasmic-facing. The chain crosses the membrane as a helical span at residues 340–350 (TMSIFIASLAF). The Periplasmic segment spans residues 351–357 (GSVDPEL). The helical transmembrane segment at 358-380 (INWAKLGILVGSISSAVIGYSWL) threads the bilayer. Topologically, residues 381–388 (RVRLRPSV) are cytoplasmic.

Belongs to the NhaA Na(+)/H(+) (TC 2.A.33) antiporter family.

It localises to the cell inner membrane. It catalyses the reaction Na(+)(in) + 2 H(+)(out) = Na(+)(out) + 2 H(+)(in). Its function is as follows. Na(+)/H(+) antiporter that extrudes sodium in exchange for external protons. This is Na(+)/H(+) antiporter NhaA from Shigella boydii serotype 4 (strain Sb227).